Here is a 784-residue protein sequence, read N- to C-terminus: LPS-assembly protein LptD (784 aa).

The first 24 residues, 1–24 (MKKRIPTLLATMIATALYSQQGLA), serve as a signal peptide directing secretion. 2 disulfide bridges follow: Cys31–Cys724 and Cys173–Cys725.

It belongs to the LptD family. As to quaternary structure, component of the lipopolysaccharide transport and assembly complex. Interacts with LptE and LptA. Post-translationally, contains two intramolecular disulfide bonds.

It localises to the cell outer membrane. Functionally, together with LptE, is involved in the assembly of lipopolysaccharide (LPS) at the surface of the outer membrane. The sequence is that of LPS-assembly protein LptD from Shigella flexneri serotype 5b (strain 8401).